The sequence spans 290 residues: Membrane-spanning 4-domains subfamily A member 8 (290 aa).

A compositionally biased stretch (polar residues) spans 1–21 (MNRPTAQGAVNLSGSKFSTAK). Positions 1–25 (MNRPTAQGAVNLSGSKFSTAKSWEP) are disordered. Residues 1 to 108 (MNRPTAQGAV…PAQRVLKKGQ (108 aa)) are Cytoplasmic-facing. Residues 109 to 129 (VLGAIQILIGLVHIGLGSIMI) traverse the membrane as a helical segment. Residues 130 to 138 (TNLFSHYTP) are Extracellular-facing. A helical membrane pass occupies residues 139 to 159 (VSLYGGFPFWGGIWFIISGSL). Over 160–174 (SVAAETQPNSPCLLN) the chain is Cytoplasmic. A helical membrane pass occupies residues 175 to 195 (GSVGLNIFSAICSAVGIMLFI). Over 196-220 (TDISISSGYIYPSYYPYQENLGVRT) the chain is Extracellular. The helical transmembrane segment at 221–241 (GVAISSVLLIFCLLELSIASV) threads the bilayer. The Cytoplasmic segment spans residues 242–290 (SSHFGCQVACCHYNNPGVVIPNVYAANPVVIPEPPNPIPSYSEVVQDSR).

It belongs to the MS4A family. Expressed strongly in intestine and colon and minimally in lung and ovary.

The protein resides in the membrane. Functionally, may be involved in signal transduction as a component of a multimeric receptor complex. The protein is Membrane-spanning 4-domains subfamily A member 8 (Ms4a8) of Mus musculus (Mouse).